The primary structure comprises 253 residues: Large ribosomal subunit protein bL28m (253 aa).

Residues 1–55 (MPLHKYPPALWDVLKLKDGIYARLPEHYRRSLLEKHKPYPVHWKPHGLKYRLNPK) constitute a mitochondrion transit peptide.

This sequence belongs to the bacterial ribosomal protein bL28 family. In terms of assembly, component of the mitochondrial ribosome large subunit (39S) which comprises a 16S rRNA and about 50 distinct proteins.

It is found in the mitochondrion. The polypeptide is Large ribosomal subunit protein bL28m (mrpl28) (Xenopus laevis (African clawed frog)).